The sequence spans 231 residues: 26S proteasome non-ATPase regulatory subunit 10 (231 aa).

ANK repeat units follow at residues Gly3–Thr36, Asp37–Lys69, Asp70–Val102, Asn103–Lys135, Asp136–Gln168, Asp169–Glu201, and Asn202–Ser226.

As to quaternary structure, part of transient complex containing PSMD10, PSMC4, PSMC5 and PAAF1 formed during the assembly of the 26S proteasome. Stays associated throughout the assembly of the PA700/19S RC and is released upon association with the 20S core. Interacts with PSMC4. Interacts with RB1. Interacts with CDK4. Interacts with MDM2. Interacts with RELA. Associates with a CDK4:CCND2 serine/threonine kinase complex. Interacts with ARHGDIA and increases the interaction between ARHGDIA and RHOA, hence promotes ARHGDIA inactivation of RHOA and ROCK.

The protein localises to the cytoplasm. The protein resides in the nucleus. Functionally, acts as a chaperone during the assembly of the 26S proteasome, specifically of the PA700/19S regulatory complex (RC). In the initial step of the base subcomplex assembly is part of an intermediate PSMD10:PSMC4:PSMC5:PAAF1 module which probably assembles with a PSMD5:PSMC2:PSMC1:PSMD2 module. Independently of the proteasome, regulates EGF-induced AKT activation through inhibition of the RHOA/ROCK/PTEN pathway, leading to prolonged AKT activation. Plays an important role in RAS-induced tumorigenesis. Its function is as follows. Acts as an oncoprotein by being involved in negative regulation of tumor suppressors RB1 and p53/TP53. Overexpression is leading to phosphorylation of RB1 and proteasomal degradation of RB1. Regulates CDK4-mediated phosphorylation of RB1 by competing with CDKN2A for binding with CDK4. Facilitates binding of MDM2 to p53/TP53 and the mono- and polyubiquitination of p53/TP53 by MDM2 suggesting a function in targeting the TP53:MDM2 complex to the 26S proteasome. Involved in p53-independent apoptosis. Involved in regulation of NF-kappa-B by retaining it in the cytoplasm. Binds to the NF-kappa-B component RELA and accelerates its XPO1/CRM1-mediated nuclear export. The chain is 26S proteasome non-ATPase regulatory subunit 10 (Psmd10) from Mus musculus (Mouse).